Consider the following 488-residue polypeptide: GTPase Der (488 aa).

EngA-type G domains follow at residues 3-166 (PVVA…AEAM) and 200-373 (IKLA…DSAT). Residues 9-16 (GRPNVGKS), 56-60 (DTGGI), 118-121 (NKVD), 206-213 (GKPNVGKS), 253-257 (DTAGV), and 318-321 (NKWD) contribute to the GTP site. The KH-like domain maps to 374 to 458 (RRVSTSMLTR…PIQLRFHEGD (85 aa)).

The protein belongs to the TRAFAC class TrmE-Era-EngA-EngB-Septin-like GTPase superfamily. EngA (Der) GTPase family. As to quaternary structure, associates with the 50S ribosomal subunit.

In terms of biological role, GTPase that plays an essential role in the late steps of ribosome biogenesis. The sequence is that of GTPase Der from Shewanella amazonensis (strain ATCC BAA-1098 / SB2B).